Reading from the N-terminus, the 743-residue chain is Ectonucleotide pyrophosphatase/phosphodiesterase C27A7.3 (743 aa).

The Cytoplasmic portion of the chain corresponds to 1–23; sequence MSNRVVDVNSKKTGTSWKKKLMK. A helical; Signal-anchor for type II membrane protein membrane pass occupies residues 24-44; that stretch reads IVIWSLAMLSFIAGLVLLGLV. The Lumenal portion of the chain corresponds to 45–743; it reads AAATISGSKN…LRRNITTSLW (699 aa). The Zn(2+) site is built by D87 and T123. Catalysis depends on T123, which acts as the Nucleophile. The N-linked (GlcNAc...) asparagine glycan is linked to N195. Zn(2+)-binding residues include D243, H247, D286, and H287. 2 N-linked (GlcNAc...) asparagine glycosylation sites follow: N293 and N320. A Zn(2+)-binding site is contributed by H383. N-linked (GlcNAc...) asparagine glycans are attached at residues N406, N434, and N536. Residues D635, N637, D639, I641, and D643 each coordinate Ca(2+). The N-linked (GlcNAc...) asparagine glycan is linked to N737.

It belongs to the nucleotide pyrophosphatase/phosphodiesterase family. It depends on Zn(2+) as a cofactor. Ca(2+) serves as cofactor.

The protein resides in the membrane. Probable phosphodiesterase. The protein is Ectonucleotide pyrophosphatase/phosphodiesterase C27A7.3 of Caenorhabditis elegans.